The primary structure comprises 192 residues: Small ribosomal subunit protein uS5 (192 aa).

The S5 DRBM domain occupies 22–85 (LVDKLVTINR…DRAKRAMIRV (64 aa)).

This sequence belongs to the universal ribosomal protein uS5 family. Part of the 30S ribosomal subunit. Contacts proteins S4 and S8.

With S4 and S12 plays an important role in translational accuracy. Functionally, located at the back of the 30S subunit body where it stabilizes the conformation of the head with respect to the body. The polypeptide is Small ribosomal subunit protein uS5 (Gluconacetobacter diazotrophicus (strain ATCC 49037 / DSM 5601 / CCUG 37298 / CIP 103539 / LMG 7603 / PAl5)).